Consider the following 154-residue polypeptide: Transcription antitermination protein NusB (154 aa).

It belongs to the NusB family.

In terms of biological role, involved in transcription antitermination. Required for transcription of ribosomal RNA (rRNA) genes. Binds specifically to the boxA antiterminator sequence of the ribosomal RNA (rrn) operons. This is Transcription antitermination protein NusB from Enterococcus faecalis (strain ATCC 700802 / V583).